A 251-amino-acid polypeptide reads, in one-letter code: Derlin-1 (251 aa).

N-acetylserine is present on S2. Residues 2-15 (SDIGDWFRSIPAIT) lie on the Cytoplasmic side of the membrane. Residues 16 to 31 (RYWFAATVAVPLVGKL) form a helical membrane-spanning segment. The Lumenal segment spans residues 32 to 69 (GLISPAYLFLWPEAFLYRFQIWRPITATFYFPVGPGTG). The helical transmembrane segment at 70 to 89 (FLYLVNLYFLYQYSTRLETG) threads the bilayer. Topologically, residues 90 to 94 (AFDGR) are cytoplasmic. The chain crosses the membrane as a helical span at residues 95–115 (PADYLFMLLFNWICIVITGLA). The Lumenal portion of the chain corresponds to 116–122 (MDMQLLM). A helical membrane pass occupies residues 123–137 (IPLIMSVLYVWAQLN). The Cytoplasmic segment spans residues 138–154 (RDMIVSFWFGTRFKACY). The helical transmembrane segment at 155 to 166 (LPWVILGFNYII) threads the bilayer. Residues 167 to 170 (GGSV) are Lumenal-facing. Residues 171–189 (INELIGNLVGHLYFFLMFR) form a helical membrane-spanning segment. The Cytoplasmic segment spans residues 190–251 (YPMDLGGRNF…WGQGFRLGDQ (62 aa)). S201 is modified (phosphoserine). At T202 the chain carries Phosphothreonine. Phosphoserine is present on S226. Residues 229-251 (RAADQNGGGGRHNWGQGFRLGDQ) are disordered. The SHP-box signature appears at 241 to 248 (NWGQGFRL).

This sequence belongs to the derlin family. In terms of assembly, homotetramer. The four subunits of the tetramer are arranged in a twofold symmetry. Forms heterooligomers with DERL2 and DERL3; binding to DERL3 is poorer than that between DERL2 and DERL3. Interacts (via SHP-box motif) with VCP. Interacts with AMFR, SELENOS, SEL1L, SELENOK and SYVN1, as well as with SEL1L-SYVN1 and VCP-SELENOS protein complexes; this interaction is weaker than that observed between DERL2 and these complexes. Interacts with NGLY1 and YOD1. Does not bind to EDEM1. Interacts with DNAJB9. Interacts with RNF103. Interacts with HM13. Interacts with XBP1 isoform 1 (via luminal/ectodomain domain); the interaction obviates the need for ectodomain shedding prior HM13/SPP-mediated XBP1 isoform 1 cleavage. Interacts with the signal recognition particle/SRP and the SRP receptor; in the process of endoplasmic reticulum stress-induced pre-emptive quality control. May interact with UBXN6. Interacts with ZFAND2B; probably through VCP. Interacts with CCDC47. Interacts with C18orf32. May interact with TRAM1. Forms a complex with SVIP and VCP/p97. (Microbial infection) Interacts with the cytomegalovirus US11 protein. Ubiquitous.

It is found in the endoplasmic reticulum membrane. In terms of biological role, functional component of endoplasmic reticulum-associated degradation (ERAD) for misfolded lumenal proteins. Forms homotetramers which encircle a large channel traversing the endoplasmic reticulum (ER) membrane. This allows the retrotranslocation of misfolded proteins from the ER into the cytosol where they are ubiquitinated and degraded by the proteasome. The channel has a lateral gate within the membrane which provides direct access to membrane proteins with no need to reenter the ER lumen first. May mediate the interaction between VCP and the misfolded protein. Also involved in endoplasmic reticulum stress-induced pre-emptive quality control, a mechanism that selectively attenuates the translocation of newly synthesized proteins into the endoplasmic reticulum and reroutes them to the cytosol for proteasomal degradation. By controlling the steady-state expression of the IGF1R receptor, indirectly regulates the insulin-like growth factor receptor signaling pathway. Functionally, (Microbial infection) In case of infection by cytomegaloviruses, it plays a central role in the export from the ER and subsequent degradation of MHC class I heavy chains via its interaction with US11 viral protein, which recognizes and associates with MHC class I heavy chains. Also participates in the degradation process of misfolded cytomegalovirus US2 protein. The chain is Derlin-1 from Homo sapiens (Human).